A 132-amino-acid polypeptide reads, in one-letter code: Small ribosomal subunit protein uS9 (132 aa).

This sequence belongs to the universal ribosomal protein uS9 family.

The chain is Small ribosomal subunit protein uS9 from Leptospira borgpetersenii serovar Hardjo-bovis (strain JB197).